Here is a 914-residue protein sequence, read N- to C-terminus: PHD finger protein 14 (914 aa).

Residues 19-276 (DALDYDSSDD…EDSLLERPQT (258 aa)) are disordered. The segment covering 53–68 (ESAAGSESDSDAAAAS) has biased composition (low complexity). Residues 90 to 102 (EKVKESFSEETSS) are compositionally biased toward basic and acidic residues. Acidic residues-rich tracts occupy residues 155-168 (ELNE…EDDN) and 191-233 (GEED…DSEE). The PHD-type 1 zinc-finger motif lies at 285 to 346 (ILICCVCLGD…PWFCDACKNG (62 aa)). Zn(2+) is bound by residues C288, C291, C305, C308, H313, C316, C340, C343, C351, C354, H371, C374, C407, C410, C424, C429, H434, C437, C461, and H464. The C2HC pre-PHD-type zinc-finger motif lies at 348-381 (SPSCELCPSQDGIFKETDAGRWVHVVCALYVPGV). The PHD-type 2 zinc finger occupies 405–465 (KECSLCEDTR…PFFAYCKQHA (61 aa)). Residues 596-644 (MIQIQDNIVEQKNLKDKLESEQEKLHMEYDKLCESLEDLQNVNGQLRTE) adopt a coiled-coil conformation. The PHD-type 3 zinc finger occupies 692–746 (LYSCGICKKNQDQHLLLLCDTCKLHYHLGCLDPPLTRMPKKTKNSYWQCSECDQA). Zn(2+)-binding residues include C695, C698, C710, C713, H718, C721, C740, and C743. Residues 777–838 (PQEMSPEPKK…PKADDTRTEC (62 aa)) form a disordered region. The segment covering 792–802 (TRTRGQKRKRM) has biased composition (basic residues). The segment covering 803-817 (SICEEEKMEEPLPRE) has biased composition (basic and acidic residues). Residues 835–888 (RTECTTCKGPGDNENLVRCDECRLCYHFGCLDPPLKKSPKQTGYGWICQECDTS) form a PHD-type 4 zinc finger. The Zn(2+) site is built by C838, C841, C853, C856, H861, C864, C882, and C885. Residues 887–914 (TSSSKEEEAQEVEEESVNEETAEQEIPD) are disordered. A compositionally biased stretch (acidic residues) spans 894-914 (EAQEVEEESVNEETAEQEIPD).

Interacts with histone H3.

It localises to the nucleus. Functionally, histone-binding protein. Binds preferentially to unmodified histone H3 but can also bind to a lesser extent to histone H3 trimethylated at 'Lys-9' (H3K9me3) as well as to histone H3 monomethylated at 'Lys-27' (H3K27ac) and trimethylated at 'Lys-27' (H3K27me3). Represses PDGFRA expression, thus playing a role in regulation of mesenchymal cell proliferation. This chain is PHD finger protein 14, found in Danio rerio (Zebrafish).